The sequence spans 299 residues: 4-diphosphocytidyl-2-C-methyl-D-erythritol kinase (299 aa).

Lysine 20 is a catalytic residue. An ATP-binding site is contributed by 106–116 (PMGGGLGGGSS). Aspartate 148 is an active-site residue.

Belongs to the GHMP kinase family. IspE subfamily. In terms of assembly, homodimer.

It carries out the reaction 4-CDP-2-C-methyl-D-erythritol + ATP = 4-CDP-2-C-methyl-D-erythritol 2-phosphate + ADP + H(+). The protein operates within isoprenoid biosynthesis; isopentenyl diphosphate biosynthesis via DXP pathway; isopentenyl diphosphate from 1-deoxy-D-xylulose 5-phosphate: step 3/6. Functionally, catalyzes the phosphorylation of the position 2 hydroxy group of 4-diphosphocytidyl-2C-methyl-D-erythritol. The protein is 4-diphosphocytidyl-2-C-methyl-D-erythritol kinase of Yersinia pseudotuberculosis serotype O:1b (strain IP 31758).